A 209-amino-acid chain; its full sequence is Protein GrpE (209 aa).

Basic and acidic residues-rich tracts occupy residues 1–16 (MKKS…KEES) and 34–44 (KAGEKTAEPEK). The tract at residues 1–61 (MKKSTKKEST…EKSPEAACRE (61 aa)) is disordered.

It belongs to the GrpE family. As to quaternary structure, homodimer.

Its subcellular location is the cytoplasm. Participates actively in the response to hyperosmotic and heat shock by preventing the aggregation of stress-denatured proteins, in association with DnaK and GrpE. It is the nucleotide exchange factor for DnaK and may function as a thermosensor. Unfolded proteins bind initially to DnaJ; upon interaction with the DnaJ-bound protein, DnaK hydrolyzes its bound ATP, resulting in the formation of a stable complex. GrpE releases ADP from DnaK; ATP binding to DnaK triggers the release of the substrate protein, thus completing the reaction cycle. Several rounds of ATP-dependent interactions between DnaJ, DnaK and GrpE are required for fully efficient folding. This Methanosarcina acetivorans (strain ATCC 35395 / DSM 2834 / JCM 12185 / C2A) protein is Protein GrpE.